The following is a 204-amino-acid chain: Octanoyltransferase (204 aa).

The BPL/LPL catalytic domain maps to 27–202; it reads QGGEEALLLL…RFQPFLHLHL (176 aa). Residues 65–72, 132–134, and 145–147 each bind substrate; these read RGGDVTYH, SIG, and GFA. The active-site Acyl-thioester intermediate is cysteine 163.

It belongs to the LipB family.

The protein localises to the cytoplasm. The enzyme catalyses octanoyl-[ACP] + L-lysyl-[protein] = N(6)-octanoyl-L-lysyl-[protein] + holo-[ACP] + H(+). It participates in protein modification; protein lipoylation via endogenous pathway; protein N(6)-(lipoyl)lysine from octanoyl-[acyl-carrier-protein]: step 1/2. Functionally, catalyzes the transfer of endogenously produced octanoic acid from octanoyl-acyl-carrier-protein onto the lipoyl domains of lipoate-dependent enzymes. Lipoyl-ACP can also act as a substrate although octanoyl-ACP is likely to be the physiological substrate. This is Octanoyltransferase from Geobacter sp. (strain M21).